The primary structure comprises 215 residues: Cytochrome b6 (215 aa).

The helical transmembrane segment at 32–52 threads the bilayer; it reads IFYCLGGITLTCFLVQVATGF. Cysteine 35 lines the heme c pocket. Residues histidine 86 and histidine 100 each contribute to the heme b site. Transmembrane regions (helical) follow at residues 90–110, 116–136, and 186–206; these read ASMMVLMMILHVFRVYLTGGF, LTWVTGVVLAVLTASFGVTGY, and LHTFVLPLLTAVFMLMHFLMI. Residues histidine 187 and histidine 202 each contribute to the heme b site.

It belongs to the cytochrome b family. PetB subfamily. In terms of assembly, the 4 large subunits of the cytochrome b6-f complex are cytochrome b6, subunit IV (17 kDa polypeptide, PetD), cytochrome f and the Rieske protein, while the 4 small subunits are PetG, PetL, PetM and PetN. The complex functions as a dimer. The cofactor is heme b. Heme c serves as cofactor.

Its subcellular location is the plastid. The protein resides in the chloroplast thylakoid membrane. In terms of biological role, component of the cytochrome b6-f complex, which mediates electron transfer between photosystem II (PSII) and photosystem I (PSI), cyclic electron flow around PSI, and state transitions. The chain is Cytochrome b6 from Eucalyptus globulus subsp. globulus (Tasmanian blue gum).